Here is a 444-residue protein sequence, read N- to C-terminus: Cytokine receptor-like factor 3 (444 aa).

A coiled-coil region spans residues 1-65 (MSIEAEALLQ…QELQTAVSRL (65 aa)). The Fibronectin type-III domain maps to 177-270 (PPVQIEELVE…PQTGYTTLAP (94 aa)).

It belongs to the cytokine receptor-like factor 3 family.

It is found in the cytoplasm. Its function is as follows. May play a role in the negative regulation of cell cycle progression. The protein is Cytokine receptor-like factor 3 (crlf3) of Danio rerio (Zebrafish).